We begin with the raw amino-acid sequence, 429 residues long: Ribosomal RNA small subunit methyltransferase B (429 aa).

S-adenosyl-L-methionine-binding positions include 254–260 (CAAPGGK), aspartate 277, aspartate 303, and aspartate 322. Cysteine 375 functions as the Nucleophile in the catalytic mechanism.

This sequence belongs to the class I-like SAM-binding methyltransferase superfamily. RsmB/NOP family.

Its subcellular location is the cytoplasm. It catalyses the reaction cytidine(967) in 16S rRNA + S-adenosyl-L-methionine = 5-methylcytidine(967) in 16S rRNA + S-adenosyl-L-homocysteine + H(+). Specifically methylates the cytosine at position 967 (m5C967) of 16S rRNA. This is Ribosomal RNA small subunit methyltransferase B from Escherichia coli O7:K1 (strain IAI39 / ExPEC).